Here is a 133-residue protein sequence, read N- to C-terminus: Small ribosomal subunit protein uS8 (133 aa).

This sequence belongs to the universal ribosomal protein uS8 family. As to quaternary structure, part of the 30S ribosomal subunit. Contacts proteins S5 and S12.

One of the primary rRNA binding proteins, it binds directly to 16S rRNA central domain where it helps coordinate assembly of the platform of the 30S subunit. In Leptospira interrogans serogroup Icterohaemorrhagiae serovar copenhageni (strain Fiocruz L1-130), this protein is Small ribosomal subunit protein uS8.